Here is a 327-residue protein sequence, read N- to C-terminus: uncharacterized protein (327 aa).

Positions methionine 1–alanine 24 are cleaved as a signal peptide.

It belongs to the fimbrial protein family.

It localises to the fimbrium. In terms of biological role, part of the sfmACDHF fimbrial operon. Could contribute to adhesion to various surfaces in specific environmental niches. Increases adhesion to eukaryotic T24 bladder epithelial cells in the absence of fim genes. This is an uncharacterized protein from Escherichia coli (strain K12).